The sequence spans 429 residues: Probable E3 ubiquitin-protein ligase makorin-1 (429 aa).

3 C3H1-type zinc fingers span residues 18–45 (WTKHVTCRYFMHGLCKEGDNCRYSHDLT), 48–75 (KPAAMMCKFFQKGNCVFGERCRFEHCKP), and 153–180 (ELRKQLCPYAAVGECRYGVNCAYLHGDV). The makorin-type Cys-His stretch occupies residues 181–208 (CDMCGLQVLHPTDSSQRSEHTKACIEAH). An RING-type zinc finger spans residues 226 to 280 (CGVCMEVVFEKANPSERRFGILSNCSHCYCLKCIRKWRSAKQFESKIIKSCPECR). The segment at 309–338 (GMGRKPCRYFDEGRGICPFGANCFYKHAFP) adopts a C3H1-type 4 zinc-finger fold. Residues 343–362 (EEAQPQRRQTGSSSRNRNSR) form a disordered region. A compositionally biased stretch (low complexity) spans 348-358 (QRRQTGSSSRN).

It carries out the reaction S-ubiquitinyl-[E2 ubiquitin-conjugating enzyme]-L-cysteine + [acceptor protein]-L-lysine = [E2 ubiquitin-conjugating enzyme]-L-cysteine + N(6)-ubiquitinyl-[acceptor protein]-L-lysine.. It participates in protein modification; protein ubiquitination. Functionally, E3 ubiquitin ligase catalyzing the covalent attachment of ubiquitin moieties onto substrate proteins. This is Probable E3 ubiquitin-protein ligase makorin-1 from Takifugu rubripes (Japanese pufferfish).